Reading from the N-terminus, the 211-residue chain is Claudin-7 (211 aa).

Residues 1-7 lie on the Cytoplasmic side of the membrane; sequence MANSGLQ. Residues 8–28 traverse the membrane as a helical segment; the sequence is LLGFSMAMLGWVGLIASTAIP. Topologically, residues 29 to 81 are extracellular; it reads QWQMSSYAGDNIITAQAMYKGLWMECVTQSTGMMSCKMYDSVLALPGALQATR. The helical transmembrane segment at 82-102 threads the bilayer; that stretch reads ALMVVSLVLGFLAMFVATMGM. The Cytoplasmic segment spans residues 103-119; that stretch reads KCTRCGGDDKAKKARIA. Residues 120 to 140 form a helical membrane-spanning segment; it reads MTGGIVFIVAGLAALVACSWI. Topologically, residues 141-160 are extracellular; that stretch reads GHQIVTDFYNPLTPMNVKYE. The helical transmembrane segment at 161 to 181 threads the bilayer; it reads FGPAIFIGWAGSALVLLGGAL. The Cytoplasmic portion of the chain corresponds to 182-211; sequence LSCSCPGSESKAAYRAPRSYPKSNSSKEYV. The segment at 210 to 211 is interactions with TJP1, TJP2 and TJP3; sequence YV.

Belongs to the claudin family. Directly interacts with TJP1/ZO-1, TJP2/ZO-2 and TJP3/ZO-3. The phosphorylated form interacts with EPCAM. In terms of processing, phosphorylated. In terms of tissue distribution, expressed predominantly in lung and kidney.

Its subcellular location is the cell membrane. The protein localises to the basolateral cell membrane. The protein resides in the cell junction. It localises to the tight junction. Plays a major role in tight junction-specific obliteration of the intercellular space, through calcium-independent cell-adhesion activity. The protein is Claudin-7 (Cldn7) of Mus musculus (Mouse).